Reading from the N-terminus, the 261-residue chain is Src-like-adapter 2 (261 aa).

Residues 1 to 10 (MGSLPSRRKS) are compositionally biased toward basic residues. Residues 1 to 31 (MGSLPSRRKSLPSPSLSSSVQGQGPVTMEAE) are disordered. Glycine 2 carries the N-myristoyl glycine lipid modification. Residues 32 to 92 (RSKATAVALG…PSVHVAKVSH (61 aa)) form the SH3 domain. An SH2 domain is found at 94–191 (WLYEGLSREK…DICCLLKEPC (98 aa)). Residues 195–261 (RAGPLPGKDI…NDEAVSLDDA (67 aa)) are SLA C-terminal.

In terms of assembly, interacts (via SH2 domain) with ZAP70 (phosphorylated) and CD3Z (phosphorylated). Interacts (via SH2 domain) with CSF1R (phosphorylated). Interacts (via its C-terminal domain) with CBL (phosphorylated). Post-translationally, phosphorylated by CSF1R. As to expression, predominantly expressed in immune system, with highest levels in peripheral blood leukocytes. Expressed in spleen, thymus and lymph nodes. Expressed in T-cells as well as in monocytes, and at low level in B-cells. Also detected in placenta, prostate, skin, retina and colon.

It is found in the cytoplasm. It localises to the cell membrane. Its subcellular location is the cytoplasmic vesicle. Its function is as follows. Adapter protein, which negatively regulates T-cell receptor (TCR) signaling. Inhibits T-cell antigen-receptor induced activation of nuclear factor of activated T-cells. May act by linking signaling proteins such as ZAP70 with CBL, leading to a CBL dependent degradation of signaling proteins. This is Src-like-adapter 2 (SLA2) from Homo sapiens (Human).